The following is a 299-amino-acid chain: Caspase-1 (299 aa).

A propeptide spanning residues 1 to 28 (MLDGKQDNGNVDSVDIKQRTNGGGDEGD) is cleaved from the precursor. A disordered region spans residues 1–45 (MLDGKQDNGNVDSVDIKQRTNGGGDEGDALGSNSSSQPNRVARMP). Catalysis depends on residues His136 and Cys178. Residues 185–195 (GGITLSRTETD) constitute a propeptide that is removed on maturation.

This sequence belongs to the peptidase C14A family. Heterotetramer that consists of two anti-parallel arranged heterodimers, each one formed by a 19/18 kDa (p19/18) and a 12 kDa (p12) subunit. Post-translationally, the two subunits are derived from the precursor sequence by an autocatalytic mechanism.

Functionally, involved in the activation cascade of caspases responsible for apoptosis execution. Inhibited by the baculovirus anti-apoptotic protein p35. Cleaves p35 and nuclear immunophilin FKBP46. The protein is Caspase-1 of Spodoptera frugiperda (Fall armyworm).